A 463-amino-acid chain; its full sequence is GTPase Der (463 aa).

2 consecutive EngA-type G domains span residues 3–166 (PVVA…PESG) and 177–350 (IRIA…QSAM). GTP-binding positions include 9 to 16 (GRTNVGKS), 56 to 60 (DTGGI), 118 to 121 (NKID), 183 to 190 (GRPNVGKS), 230 to 234 (DTAGI), and 295 to 298 (NKWD). Residues 351–435 (LDLSASRLTQ…PLKLVFKSAE (85 aa)) form the KH-like domain.

This sequence belongs to the TRAFAC class TrmE-Era-EngA-EngB-Septin-like GTPase superfamily. EngA (Der) GTPase family. In terms of assembly, associates with the 50S ribosomal subunit.

GTPase that plays an essential role in the late steps of ribosome biogenesis. This is GTPase Der from Methylococcus capsulatus (strain ATCC 33009 / NCIMB 11132 / Bath).